Here is a 159-residue protein sequence, read N- to C-terminus: NADH-quinone oxidoreductase subunit I (159 aa).

4Fe-4S ferredoxin-type domains follow at residues 51–80 (RRYENGEERCIACKLCEAICPAQAIVIESD) and 90–119 (TRYDIDMTKCIYCGLCQEACPVDAIVEGPN). The [4Fe-4S] cluster site is built by C60, C63, C66, C70, C99, C102, C105, and C109.

It belongs to the complex I 23 kDa subunit family. In terms of assembly, NDH-1 is composed of 14 different subunits. Subunits NuoA, H, J, K, L, M, N constitute the membrane sector of the complex. Requires [4Fe-4S] cluster as cofactor.

The protein localises to the cell inner membrane. It carries out the reaction a quinone + NADH + 5 H(+)(in) = a quinol + NAD(+) + 4 H(+)(out). NDH-1 shuttles electrons from NADH, via FMN and iron-sulfur (Fe-S) centers, to quinones in the respiratory chain. The immediate electron acceptor for the enzyme in this species is believed to be ubiquinone. Couples the redox reaction to proton translocation (for every two electrons transferred, four hydrogen ions are translocated across the cytoplasmic membrane), and thus conserves the redox energy in a proton gradient. In Rickettsia prowazekii (strain Madrid E), this protein is NADH-quinone oxidoreductase subunit I.